The sequence spans 296 residues: Isoprenyl transferase (296 aa).

Residues 1–11 (MATERNRRRKG) show a composition bias toward basic residues. Residues 1–29 (MATERNRRRKGSYPQLPPAPDDYPTFPDK) are disordered. Asp-76 is a catalytic residue. Asp-76 contributes to the Mg(2+) binding site. Residues 77–80 (GNGR), Trp-81, Arg-89, His-93, and 121–123 (STE) contribute to the substrate site. The active-site Proton acceptor is Asn-124. Substrate contacts are provided by residues Trp-125, Arg-127, Arg-244, and 250 to 252 (RAS). Residue Glu-263 coordinates Mg(2+).

It belongs to the UPP synthase family. As to quaternary structure, homodimer. Mg(2+) is required as a cofactor.

In terms of biological role, catalyzes the condensation of isopentenyl diphosphate (IPP) with allylic pyrophosphates generating different type of terpenoids. The polypeptide is Isoprenyl transferase (Mycolicibacterium parafortuitum (Mycobacterium parafortuitum)).